The following is a 158-amino-acid chain: Large ribosomal subunit protein eL24 (158 aa).

The segment covering 98-146 has biased composition (basic and acidic residues); sequence LDASHKKAEAEKAVRELKQKKANDIEKKRADRKLQGKDVKAAKKAETKK. The tract at residues 98-158 is disordered; that stretch reads LDASHKKAEA…QPVGAKGGKK (61 aa).

This sequence belongs to the eukaryotic ribosomal protein eL24 family.

This chain is Large ribosomal subunit protein eL24 (RPL24), found in Tetrahymena thermophila (strain SB210).